We begin with the raw amino-acid sequence, 190 residues long: MNTLQLINKNHPLKKNQEPPHLVLAPFSDHDVYLQPEVAKQWERLVRATGLEKDIRLVDGYRTEKEQRRLWEYSLKENGLAYTKQFVALPGCSEHQIGLAIDVGLKKQEDDDLICPHFRDSAAADLFMQQMMNYGFILRYPEDKQEITGISYEPWHFRYVGLPHSQVITAQKWTLEEYHDYLAQTVRQFA.

Glutamate 66 provides a ligand contact to Mg(2+). Residues glutamine 67, alanine 88, serine 93, histidine 95, and aspartate 102 each coordinate a dipeptide. Histidine 95 and aspartate 102 together coordinate Cu(2+). Zn(2+) contacts are provided by histidine 95 and aspartate 102. Residue glutamate 153 is the catalytic acid/base residue of the active site. A dipeptide-binding residues include tryptophan 155 and histidine 156. Position 156 (histidine 156) interacts with Cu(2+). Residue histidine 156 coordinates Zn(2+).

The protein belongs to the peptidase M15D family. In terms of assembly, homodimer.

The protein localises to the cytoplasm. It carries out the reaction D-alanyl-D-alanine + H2O = 2 D-alanine. The enzyme catalyses UDP-N-acetyl-alpha-D-muramoyl-L-alanyl-gamma-D-glutamyl-L-lysyl-D-alanyl-D-alanine + H2O = UDP-N-acetyl-alpha-D-muramoyl-L-alanyl-gamma-D-glutamyl-L-lysyl-D-alanine + D-alanine. In terms of biological role, bifunctional enzyme, exhibiting dipeptidase and carboxypeptidase activities. Catalyzes hydrolysis of the D-alanyl-D-alanine dipeptide. Cleaves the C-terminal D-alanine residue of UDP-muramyl-pentapeptide[Ala] (UDP-MurNAc-L-Ala-D-Glu-L-Lys-D-Ala-D-Ala). Shows no activity against the pentapeptide with a C-terminal D-serine residue. Together with VanC/VanC1 and VanT, required for vancomycin resistance in E.gallinarum strain BM4174. This chain is Bifunctional D-Ala-D-Ala dipeptidase and D-Ala-D-Ala carboxypeptidase VanXYC, found in Enterococcus gallinarum.